Consider the following 269-residue polypeptide: MLEEINYDTKLFGLIGKNIKYTLSPYIHNFSFRTLGINAVYLVFDLDEMKFKRSISGILEIAEGLNVTIPYKDEVMKYLDNTDTHSTRIQAVNTIYKKSGYNTDYLAIKNLVRKKIKNVSGYECYIYGAGGAAKAAAFALSELGCSSISIVNRTKSRAYELAELLNKNGYNASIKENCNITNNILIVNSTPNSSVVPEDCVKKSDLVIEFVYRPVETELIKNAKKYGIQYINGLEILVNQAVEAEKIWFNKSVADEKIIEYLYARELVW.

Shikimate contacts are provided by residues 22–24 (TLS) and T68. The Proton acceptor role is filled by K72. N93 and D104 together coordinate shikimate. Residues 128 to 132 (GAGGA), 152 to 157 (NRTKSR), and F210 contribute to the NADP(+) site. Y212 is a shikimate binding site. G233 serves as a coordination point for NADP(+).

Belongs to the shikimate dehydrogenase family. Homodimer.

The catalysed reaction is shikimate + NADP(+) = 3-dehydroshikimate + NADPH + H(+). Its pathway is metabolic intermediate biosynthesis; chorismate biosynthesis; chorismate from D-erythrose 4-phosphate and phosphoenolpyruvate: step 4/7. Functionally, involved in the biosynthesis of the chorismate, which leads to the biosynthesis of aromatic amino acids. Catalyzes the reversible NADPH linked reduction of 3-dehydroshikimate (DHSA) to yield shikimate (SA). This is Shikimate dehydrogenase (NADP(+)) from Saccharolobus solfataricus (strain ATCC 35092 / DSM 1617 / JCM 11322 / P2) (Sulfolobus solfataricus).